The following is a 212-amino-acid chain: Probable transaldolase (212 aa).

Lysine 83 serves as the catalytic Schiff-base intermediate with substrate.

The protein belongs to the transaldolase family. Type 3B subfamily.

It is found in the cytoplasm. The catalysed reaction is D-sedoheptulose 7-phosphate + D-glyceraldehyde 3-phosphate = D-erythrose 4-phosphate + beta-D-fructose 6-phosphate. It functions in the pathway carbohydrate degradation; pentose phosphate pathway; D-glyceraldehyde 3-phosphate and beta-D-fructose 6-phosphate from D-ribose 5-phosphate and D-xylulose 5-phosphate (non-oxidative stage): step 2/3. Transaldolase is important for the balance of metabolites in the pentose-phosphate pathway. The protein is Probable transaldolase (tal) of Halalkalibacterium halodurans (strain ATCC BAA-125 / DSM 18197 / FERM 7344 / JCM 9153 / C-125) (Bacillus halodurans).